A 611-amino-acid polypeptide reads, in one-letter code: Aspartate--tRNA ligase, mitochondrial (611 aa).

The N-terminal 30 residues, 1–30, are a transit peptide targeting the mitochondrion; that stretch reads MVLSRLPACLLPLVGTKVSIQGWLVATSRQ. Glutamate 192 is a binding site for L-aspartate. The interval 216 to 219 is aspartate; sequence QQYK. Arginine 238 contacts L-aspartate. Residues 238-240 and glutamate 502 each bind ATP; that span reads RDE. Arginine 509 provides a ligand contact to L-aspartate. An ATP-binding site is contributed by 554-557; the sequence is GFDR.

It belongs to the class-II aminoacyl-tRNA synthetase family. Type 1 subfamily.

It localises to the mitochondrion. It catalyses the reaction tRNA(Asp) + L-aspartate + ATP = L-aspartyl-tRNA(Asp) + AMP + diphosphate. The protein is Aspartate--tRNA ligase, mitochondrial (msd1) of Schizosaccharomyces pombe (strain 972 / ATCC 24843) (Fission yeast).